An 838-amino-acid chain; its full sequence is Leucine--tRNA ligase (838 aa).

The 'HIGH' region signature appears at 38-48 (PYPSGKAHVGH). The 'KMSKS' region signature appears at 608–612 (KMSKS). Lys611 contacts ATP.

The protein belongs to the class-I aminoacyl-tRNA synthetase family.

The protein resides in the cytoplasm. The catalysed reaction is tRNA(Leu) + L-leucine + ATP = L-leucyl-tRNA(Leu) + AMP + diphosphate. The polypeptide is Leucine--tRNA ligase (Orientia tsutsugamushi (strain Boryong) (Rickettsia tsutsugamushi)).